A 220-amino-acid polypeptide reads, in one-letter code: UPF0319 protein YccT (220 aa).

The N-terminal stretch at 1–20 (MKTGALATFLALCLPATVFA) is a signal peptide.

The protein belongs to the UPF0319 family.

This chain is UPF0319 protein YccT, found in Salmonella heidelberg (strain SL476).